Here is a 432-residue protein sequence, read N- to C-terminus: ATP-dependent RNA helicase RhlB (432 aa).

Residues 9-37 (QNFADLGLQPQVIDGLNAKGFIKCTPIQA) carry the Q motif motif. In terms of domain architecture, Helicase ATP-binding spans 40–219 (LPVLLAGQDI…FEHMQEPEHV (180 aa)). 53-60 (AQTGTGKT) contacts ATP. The short motif at 165-168 (DEAD) is the DEAD box element. The 146-residue stretch at 245–390 (ALLQTLIEEE…QSDYDASALL (146 aa)) folds into the Helicase C-terminal domain. A disordered region spans residues 397 to 432 (LRLQRRPQQNRRNNNGQRQGGNRKHSRPRQPRNTQS). Residues 417–426 (GNRKHSRPRQ) are compositionally biased toward basic residues.

Belongs to the DEAD box helicase family. RhlB subfamily. In terms of assembly, component of the RNA degradosome, which is a multiprotein complex involved in RNA processing and mRNA degradation.

Its subcellular location is the cytoplasm. It catalyses the reaction ATP + H2O = ADP + phosphate + H(+). In terms of biological role, DEAD-box RNA helicase involved in RNA degradation. Has RNA-dependent ATPase activity and unwinds double-stranded RNA. The polypeptide is ATP-dependent RNA helicase RhlB (Aliivibrio fischeri (strain MJ11) (Vibrio fischeri)).